The chain runs to 184 residues: C-phycoerythrin class 1 subunit beta (184 aa).

(2R,3E)-phycoerythrobilin is bound by residues Cys-50 and Cys-61. Asn-72 carries the post-translational modification N4-methylasparagine. (2R,3E)-phycoerythrobilin contacts are provided by Cys-82 and Cys-165.

The protein belongs to the phycobiliprotein family. In terms of assembly, heterodimer of an alpha and a beta chain. In terms of processing, contains three covalently linked bilin chromophores.

The protein resides in the cellular thylakoid membrane. Functionally, light-harvesting photosynthetic bile pigment-protein from the phycobiliprotein complex. The protein is C-phycoerythrin class 1 subunit beta (cpeB) of Synechococcus sp. (strain WH7803).